The following is a 345-amino-acid chain: Phenylalanine--tRNA ligase alpha subunit (345 aa).

Glu266 contributes to the Mg(2+) binding site.

It belongs to the class-II aminoacyl-tRNA synthetase family. Phe-tRNA synthetase alpha subunit type 1 subfamily. Tetramer of two alpha and two beta subunits. Mg(2+) is required as a cofactor.

It is found in the cytoplasm. The catalysed reaction is tRNA(Phe) + L-phenylalanine + ATP = L-phenylalanyl-tRNA(Phe) + AMP + diphosphate + H(+). This chain is Phenylalanine--tRNA ligase alpha subunit, found in Burkholderia lata (strain ATCC 17760 / DSM 23089 / LMG 22485 / NCIMB 9086 / R18194 / 383).